Reading from the N-terminus, the 122-residue chain is Lectin A (122 aa).

Position 38 (Tyr-38) interacts with Ca(2+). 3 residues coordinate an alpha-D-galactoside: Glu-44, Gln-57, and Asp-96. Ca(2+) contacts are provided by Asp-96, Thr-100, Asp-103, and Asn-104. Asp-103 serves as a coordination point for an alpha-D-galactoside.

It belongs to the LecA/PllA lectin family. In terms of assembly, homotetramer.

In terms of biological role, lectin that specifically binds alpha-galactoside-terminating glycoconjugates. Shows high apparent binding to the alpha-Gal epitope (Gal-alpha-1,3-Gal-beta-1,4-GlcNAc terminating glycans) as well as to Gal-alpha-1,4-GlcNAc and Gal-alpha-1,3-GalNAc. Gal-alpha-1,3-GalNAc may be one natural ligand bound by PllA both in the nematode symbiont and in infected insects. The chain is Lectin A from Photorhabdus laumondii subsp. laumondii (strain DSM 15139 / CIP 105565 / TT01) (Photorhabdus luminescens subsp. laumondii).